We begin with the raw amino-acid sequence, 260 residues long: Type II methyltransferase M.CviBI (260 aa).

Residues W7, K11, D54, and D177 each contribute to the S-adenosyl-L-methionine site.

Belongs to the N(4)/N(6)-methyltransferase family.

It carries out the reaction a 2'-deoxyadenosine in DNA + S-adenosyl-L-methionine = an N(6)-methyl-2'-deoxyadenosine in DNA + S-adenosyl-L-homocysteine + H(+). Functionally, a alpha subtype methylase, recognizes the double-stranded sequence 5'-GANTC-3', methylates A-2 on both strands, and protects the DNA from cleavage by the CviBI endonuclease. This is Type II methyltransferase M.CviBI from Paramecium bursaria Chlorella virus NC1A (PBCV-NC1A).